The following is a 260-amino-acid chain: 3-methyl-2-oxobutanoate hydroxymethyltransferase (260 aa).

Asp42 and Asp81 together coordinate Mg(2+). 3-methyl-2-oxobutanoate is bound by residues 42-43 (DS), Asp81, and Lys109. Glu111 contacts Mg(2+). Glu178 serves as the catalytic Proton acceptor.

This sequence belongs to the PanB family. As to quaternary structure, homodecamer; pentamer of dimers. The cofactor is Mg(2+).

The protein localises to the cytoplasm. The catalysed reaction is 3-methyl-2-oxobutanoate + (6R)-5,10-methylene-5,6,7,8-tetrahydrofolate + H2O = 2-dehydropantoate + (6S)-5,6,7,8-tetrahydrofolate. It participates in cofactor biosynthesis; (R)-pantothenate biosynthesis; (R)-pantoate from 3-methyl-2-oxobutanoate: step 1/2. Catalyzes the reversible reaction in which hydroxymethyl group from 5,10-methylenetetrahydrofolate is transferred onto alpha-ketoisovalerate to form ketopantoate. The polypeptide is 3-methyl-2-oxobutanoate hydroxymethyltransferase (Vesicomyosocius okutanii subsp. Calyptogena okutanii (strain HA)).